A 347-amino-acid chain; its full sequence is MTDTLASLAYLAGKPTAQAKIKAKPEHFQVREDLGFEFTGSGEHLMVRIRKTGENTSFVANELAKACGVKSKDVSWAGLKDRHAVTEQWLSVHLPKAETPDFSAFLAQYPSIEILATARHNKKLRPGDLVGNDFVVTLSEVSDVDDVLKRLETVAKLGVPNYFGNQRFGNNGNNLQEAKRWGRDNVRSRNQNQRSLYLSAARSWIFNLIVSARLEQSLFDKVLLGDILFKGDEQLLVSAENHADLQSQYDAGDLVISGALAGDNALPTQDDALALEQVFLDAEPDLMALIRGNRMRHDRRAIALKPANLSWQVDGNNIILTFSLDAGSFATSIIRELVQEIAFEREF.

Asp-81 (nucleophile) is an active-site residue. One can recognise a TRUD domain in the interval 158-304 (GVPNYFGNQR…MRHDRRAIAL (147 aa)).

This sequence belongs to the pseudouridine synthase TruD family.

It carries out the reaction uridine(13) in tRNA = pseudouridine(13) in tRNA. Responsible for synthesis of pseudouridine from uracil-13 in transfer RNAs. This is tRNA pseudouridine synthase D from Vibrio vulnificus (strain YJ016).